The sequence spans 216 residues: 3,4-dihydroxy-2-butanone 4-phosphate synthase (216 aa).

Residues 33–34, aspartate 38, 146–150, and glutamate 170 each bind D-ribulose 5-phosphate; these read RE and RRGHT. Glutamate 34 serves as a coordination point for Mg(2+). A Mg(2+)-binding site is contributed by histidine 149.

The protein belongs to the DHBP synthase family. As to quaternary structure, homodimer. It depends on Mg(2+) as a cofactor. Mn(2+) is required as a cofactor.

The enzyme catalyses D-ribulose 5-phosphate = (2S)-2-hydroxy-3-oxobutyl phosphate + formate + H(+). The protein operates within cofactor biosynthesis; riboflavin biosynthesis; 2-hydroxy-3-oxobutyl phosphate from D-ribulose 5-phosphate: step 1/1. Functionally, catalyzes the conversion of D-ribulose 5-phosphate to formate and 3,4-dihydroxy-2-butanone 4-phosphate. This is 3,4-dihydroxy-2-butanone 4-phosphate synthase from Pseudomonas putida (strain ATCC 47054 / DSM 6125 / CFBP 8728 / NCIMB 11950 / KT2440).